The sequence spans 263 residues: Hydroxyethylthiazole kinase 1 (263 aa).

Met-42 is a binding site for substrate. ATP-binding residues include Lys-118 and Thr-164. Gly-191 contributes to the substrate binding site.

This sequence belongs to the Thz kinase family. The cofactor is Mg(2+).

The enzyme catalyses 5-(2-hydroxyethyl)-4-methylthiazole + ATP = 4-methyl-5-(2-phosphooxyethyl)-thiazole + ADP + H(+). Its pathway is cofactor biosynthesis; thiamine diphosphate biosynthesis; 4-methyl-5-(2-phosphoethyl)-thiazole from 5-(2-hydroxyethyl)-4-methylthiazole: step 1/1. In terms of biological role, catalyzes the phosphorylation of the hydroxyl group of 4-methyl-5-beta-hydroxyethylthiazole (THZ). The protein is Hydroxyethylthiazole kinase 1 of Clostridium botulinum (strain Okra / Type B1).